Reading from the N-terminus, the 174-residue chain is WAP four-disulfide core domain protein 2 (174 aa).

Positions 1–25 (MPACRLCLLAAGLLLGLLLFTPISA) are cleaved as a signal peptide. The 46-residue stretch at 29–74 (DAEKPGECPQLEPITDCVLECTLDKDCADNRKCCQAGCSSVCSKPN) folds into the WAP 1 domain. Intrachain disulfides connect Cys-36–Cys-62, Cys-45–Cys-66, Cys-49–Cys-61, and Cys-55–Cys-70. The interval 68-117 (SVCSKPNGPSEGELSGTDTKLSETGTTTQSAGLDHTTKPPGGQVSTKPPA) is disordered. Residues 83–98 (GTDTKLSETGTTTQSA) are compositionally biased toward polar residues. The WAP 2 domain maps to 125-173 (VREKQGTCPSVDIPKLGLCEDQCQVDSQCSGNMKCCRNGCGKMACTTPK). 4 cysteine pairs are disulfide-bonded: Cys-132/Cys-160, Cys-143/Cys-164, Cys-147/Cys-159, and Cys-153/Cys-169.

Homotrimer; disulfide-linked.

It localises to the secreted. Its function is as follows. Broad range protease inhibitor. The polypeptide is WAP four-disulfide core domain protein 2 (Wfdc2) (Mus musculus (Mouse)).